A 451-amino-acid polypeptide reads, in one-letter code: ATP synthase subunit beta (451 aa).

Residue 143-150 (GGAGVGKT) coordinates ATP.

It belongs to the ATPase alpha/beta chains family. In terms of assembly, F-type ATPases have 2 components, CF(1) - the catalytic core - and CF(0) - the membrane proton channel. CF(1) has five subunits: alpha(3), beta(3), gamma(1), delta(1), epsilon(1). CF(0) has three main subunits: a(1), b(2) and c(9-12). The alpha and beta chains form an alternating ring which encloses part of the gamma chain. CF(1) is attached to CF(0) by a central stalk formed by the gamma and epsilon chains, while a peripheral stalk is formed by the delta and b chains.

The protein localises to the cell membrane. The enzyme catalyses ATP + H2O + 4 H(+)(in) = ADP + phosphate + 5 H(+)(out). In terms of biological role, produces ATP from ADP in the presence of a proton gradient across the membrane. The catalytic sites are hosted primarily by the beta subunits. In Coprothermobacter proteolyticus (strain ATCC 35245 / DSM 5265 / OCM 4 / BT), this protein is ATP synthase subunit beta.